The following is a 128-amino-acid chain: Probable 4-amino-4-deoxy-L-arabinose-phosphoundecaprenol flippase subunit ArnF (128 aa).

The Cytoplasmic portion of the chain corresponds to 1 to 2 (MG). A helical membrane pass occupies residues 3 to 23 (LMWGLFSVIIASAAQLSMGFA). The Periplasmic portion of the chain corresponds to 24-35 (ASHLPPMTHLWD). Residues 36-56 (FIAALLAFGLDARILLLGLLG) traverse the membrane as a helical segment. At 57–76 (YLLSVFCWYKTLHKLALSKA) the chain is on the cytoplasmic side. A helical membrane pass occupies residues 77-97 (YALLSMSYVLVWIASMVLPGW). At 98–100 (EGT) the chain is on the periplasmic side. A helical membrane pass occupies residues 101–121 (FSLKALLGVACIMSGLMLIFL). Residues 122–128 (PTTKQRY) lie on the Cytoplasmic side of the membrane.

The protein belongs to the ArnF family. As to quaternary structure, heterodimer of ArnE and ArnF.

It is found in the cell inner membrane. It participates in bacterial outer membrane biogenesis; lipopolysaccharide biosynthesis. Translocates 4-amino-4-deoxy-L-arabinose-phosphoundecaprenol (alpha-L-Ara4N-phosphoundecaprenol) from the cytoplasmic to the periplasmic side of the inner membrane. This chain is Probable 4-amino-4-deoxy-L-arabinose-phosphoundecaprenol flippase subunit ArnF, found in Escherichia coli O45:K1 (strain S88 / ExPEC).